A 160-amino-acid polypeptide reads, in one-letter code: Non-secretory ribonuclease (160 aa).

An N-terminal signal peptide occupies residues 1 to 27 (MVPKLFTSPICLLLLLGLMGVEGSLHA). C-linked (Man) tryptophan glycosylation is present at Trp-34. Catalysis depends on His-42, which acts as the Proton acceptor. Asn-44 carries N-linked (GlcNAc...) asparagine glycosylation. Cystine bridges form between Cys-50-Cys-110, Cys-64-Cys-122, Cys-82-Cys-137, and Cys-89-Cys-98. Tyr-60 bears the 3'-nitrotyrosine mark. Residue 65 to 69 (KNQNT) coordinates substrate. Residues Asn-92, Asn-111, and Asn-138 are each glycosylated (N-linked (GlcNAc...) asparagine). His-155 acts as the Proton donor in catalysis.

The protein belongs to the pancreatic ribonuclease family. Interacts with and forms a tight 1:1 complex with RNH1. Dimerization of two such complexes may occur.

It localises to the lysosome. Its subcellular location is the cytoplasmic granule. The catalysed reaction is an [RNA] containing cytidine + H2O = an [RNA]-3'-cytidine-3'-phosphate + a 5'-hydroxy-ribonucleotide-3'-[RNA].. It catalyses the reaction an [RNA] containing uridine + H2O = an [RNA]-3'-uridine-3'-phosphate + a 5'-hydroxy-ribonucleotide-3'-[RNA].. In terms of biological role, this is a non-secretory ribonuclease. It is a pyrimidine specific nuclease with a slight preference for U. Cytotoxin and helminthotoxin. Possesses a wide variety of biological activities. In Papio hamadryas (Hamadryas baboon), this protein is Non-secretory ribonuclease (RNASE2).